A 606-amino-acid chain; its full sequence is ATP-dependent rRNA helicase SPB4 (606 aa).

Residues 7-35 carry the Q motif motif; the sequence is WDNLGFSLLPWIRTGLDVMGFETMTPVQA. The 187-residue stretch at 38–224 folds into the Helicase ATP-binding domain; it reads IPMLAGNKDV…KTGLRNPVRI (187 aa). Position 51-58 (51-58) interacts with ATP; it reads SVTGSGKT. Positions 172 to 175 match the DEAD box motif; that stretch reads DEAD. The Helicase C-terminal domain maps to 248-404; that stretch reads KLQLLVSILN…ELDLEVKGIT (157 aa). Position 254 is a phosphoserine (S254). The stretch at 539 to 582 forms a coiled coil; it reads KTLTKERKLERKEKMSLKRKAIEEELKAEELDENAEEERIKEDW.

It belongs to the DEAD box helicase family. DDX55/SPB4 subfamily. Component of pre-60S ribosomal complexes.

The protein localises to the nucleus. The protein resides in the nucleolus. The catalysed reaction is ATP + H2O = ADP + phosphate + H(+). In terms of biological role, ATP-binding RNA helicase involved in the biogenesis of 60S ribosomal subunits. Binds 90S pre-ribosomal particles and dissociates from pre-60S ribosomal particles after processing of 27SB pre-rRNA. Required for the normal formation of 18S rRNA through the processing of pre-rRNAs at sites A0, A1 and A2, and the normal formation of 25S and 5.8S rRNAs through the processing of pre-rRNAs at sites C1 and C2. Also required for recruitment of NOG2 to pre-ribosomes. The protein is ATP-dependent rRNA helicase SPB4 of Saccharomyces cerevisiae (strain ATCC 204508 / S288c) (Baker's yeast).